The following is a 181-amino-acid chain: ATP-dependent protease subunit HslV (181 aa).

The active site involves Thr7. Gly166, Cys169, and Thr172 together coordinate Na(+).

It belongs to the peptidase T1B family. HslV subfamily. As to quaternary structure, a double ring-shaped homohexamer of HslV is capped on each side by a ring-shaped HslU homohexamer. The assembly of the HslU/HslV complex is dependent on binding of ATP.

It is found in the cytoplasm. It catalyses the reaction ATP-dependent cleavage of peptide bonds with broad specificity.. Allosterically activated by HslU binding. Protease subunit of a proteasome-like degradation complex believed to be a general protein degrading machinery. This is ATP-dependent protease subunit HslV from Acidovorax ebreus (strain TPSY) (Diaphorobacter sp. (strain TPSY)).